The chain runs to 447 residues: Glutamyl-tRNA(Gln) amidotransferase subunit A (447 aa).

Catalysis depends on charge relay system residues K50 and S125. Catalysis depends on S149, which acts as the Acyl-ester intermediate.

Belongs to the amidase family. GatA subfamily. Heterotrimer of A, B and C subunits.

It catalyses the reaction L-glutamyl-tRNA(Gln) + L-glutamine + ATP + H2O = L-glutaminyl-tRNA(Gln) + L-glutamate + ADP + phosphate + H(+). Allows the formation of correctly charged Gln-tRNA(Gln) through the transamidation of misacylated Glu-tRNA(Gln) in organisms which lack glutaminyl-tRNA synthetase. The reaction takes place in the presence of glutamine and ATP through an activated gamma-phospho-Glu-tRNA(Gln). The chain is Glutamyl-tRNA(Gln) amidotransferase subunit A from Sulfurimonas denitrificans (strain ATCC 33889 / DSM 1251) (Thiomicrospira denitrificans (strain ATCC 33889 / DSM 1251)).